We begin with the raw amino-acid sequence, 148 residues long: Large-conductance mechanosensitive channel (148 aa).

Helical transmembrane passes span 14-34 (VVDM…INTL) and 85-105 (GIFV…FLSV).

Belongs to the MscL family. As to quaternary structure, homopentamer.

Its subcellular location is the cell inner membrane. Functionally, channel that opens in response to stretch forces in the membrane lipid bilayer. May participate in the regulation of osmotic pressure changes within the cell. This is Large-conductance mechanosensitive channel from Chlorobium phaeobacteroides (strain DSM 266 / SMG 266 / 2430).